The primary structure comprises 207 residues: Ribosomal RNA large subunit methyltransferase E (207 aa).

Residues G60, W62, D80, D96, and D121 each contribute to the S-adenosyl-L-methionine site. K161 acts as the Proton acceptor in catalysis.

It belongs to the class I-like SAM-binding methyltransferase superfamily. RNA methyltransferase RlmE family.

The protein localises to the cytoplasm. The enzyme catalyses uridine(2552) in 23S rRNA + S-adenosyl-L-methionine = 2'-O-methyluridine(2552) in 23S rRNA + S-adenosyl-L-homocysteine + H(+). Its function is as follows. Specifically methylates the uridine in position 2552 of 23S rRNA at the 2'-O position of the ribose in the fully assembled 50S ribosomal subunit. This Pseudomonas aeruginosa (strain UCBPP-PA14) protein is Ribosomal RNA large subunit methyltransferase E.